A 262-amino-acid polypeptide reads, in one-letter code: Acyl-[acyl-carrier-protein]--UDP-N-acetylglucosamine O-acyltransferase (262 aa).

Belongs to the transferase hexapeptide repeat family. LpxA subfamily. As to quaternary structure, homotrimer.

The protein resides in the cytoplasm. It carries out the reaction a (3R)-hydroxyacyl-[ACP] + UDP-N-acetyl-alpha-D-glucosamine = a UDP-3-O-[(3R)-3-hydroxyacyl]-N-acetyl-alpha-D-glucosamine + holo-[ACP]. The protein operates within glycolipid biosynthesis; lipid IV(A) biosynthesis; lipid IV(A) from (3R)-3-hydroxytetradecanoyl-[acyl-carrier-protein] and UDP-N-acetyl-alpha-D-glucosamine: step 1/6. Its function is as follows. Involved in the biosynthesis of lipid A, a phosphorylated glycolipid that anchors the lipopolysaccharide to the outer membrane of the cell. This is Acyl-[acyl-carrier-protein]--UDP-N-acetylglucosamine O-acyltransferase from Sodalis glossinidius (strain morsitans).